The primary structure comprises 100 residues: Urease subunit gamma 1 (100 aa).

The protein belongs to the urease gamma subunit family. In terms of assembly, heterotrimer of UreA (gamma), UreB (beta) and UreC (alpha) subunits. Three heterotrimers associate to form the active enzyme.

The protein resides in the cytoplasm. It catalyses the reaction urea + 2 H2O + H(+) = hydrogencarbonate + 2 NH4(+). The protein operates within nitrogen metabolism; urea degradation; CO(2) and NH(3) from urea (urease route): step 1/1. Functionally, disruption of the ure1 gene cluster suggests that it protects brucellae during their passage through the stomach. The major route of infection in human brucellosis is oral. This chain is Urease subunit gamma 1, found in Brucella abortus (strain 2308).